The sequence spans 279 residues: Proto-oncogene FRAT1 (279 aa).

2 disordered regions span residues 1-24 and 56-76; these read MPCR…EEDS and AQHS…APGP. Acidic residues predominate over residues 7-24; the sequence is EEEEAGEEAEGEEEEEDS. Ser-88 carries the phosphoserine modification. Disordered regions lie at residues 136–200 and 228–279; these read GPSA…DDPH and RAKL…VPGS. The interval 198-220 is involved in GSK-3 binding; it reads DPHRLLQQLVLSGNLIKEAVRRL. Residues Ser-249 and Ser-252 each carry the phosphoserine modification.

It belongs to the GSK-3-binding protein family. Binds DVL1. Binds GSK-3 and prevent GSK-3-dependent phosphorylation. Post-translationally, phosphorylated.

It is found in the cytoplasm. In terms of biological role, positively regulates the Wnt signaling pathway by stabilizing beta-catenin through the association with GSK-3. May play a role in tumor progression and collaborate with PIM1 and MYC in lymphomagenesis. This chain is Proto-oncogene FRAT1 (FRAT1), found in Homo sapiens (Human).